The chain runs to 132 residues: Replication enhancer protein (132 aa).

The protein belongs to the geminiviridae replication enhancer protein family. Homooligomer. Interacts with the replication-associated protein (REP). Interacts with host proliferating cell nuclear antigen (PCNA). Interacts with host retinoblastoma-related protein 1 (RBR1), and may thereby deregulate the host cell cycle. Oligomerization and interaction with PCNA are necessary for optimal replication enhancement.

Its function is as follows. Increases viral DNA accumulation. Enhances infectivity and symptom expression. This chain is Replication enhancer protein, found in Abutilon (Upland cotton).